Reading from the N-terminus, the 238-residue chain is ATP synthase subunit a (238 aa).

A run of 5 helical transmembrane segments spans residues 18–38 (LTLL…VFWA), 76–96 (YSLL…LGLF), 114–134 (NLAF…IEGV), 166–186 (SLAI…GLIV), and 193–213 (VYWW…SVFI).

Belongs to the ATPase A chain family. In terms of assembly, F-type ATPases have 2 components, CF(1) - the catalytic core - and CF(0) - the membrane proton channel. CF(1) has five subunits: alpha(3), beta(3), gamma(1), delta(1), epsilon(1). CF(0) has three main subunits: a(1), b(2) and c(9-12). The alpha and beta chains form an alternating ring which encloses part of the gamma chain. CF(1) is attached to CF(0) by a central stalk formed by the gamma and epsilon chains, while a peripheral stalk is formed by the delta and b chains.

The protein resides in the cell membrane. In terms of biological role, key component of the proton channel; it plays a direct role in the translocation of protons across the membrane. The sequence is that of ATP synthase subunit a from Streptococcus pyogenes serotype M49 (strain NZ131).